Reading from the N-terminus, the 258-residue chain is Hydroxyacylglutathione hydrolase (258 aa).

Histidine 52, histidine 54, aspartate 56, histidine 57, histidine 109, aspartate 126, and histidine 164 together coordinate Zn(2+).

The protein belongs to the metallo-beta-lactamase superfamily. Glyoxalase II family. In terms of assembly, monomer. Zn(2+) is required as a cofactor.

The catalysed reaction is an S-(2-hydroxyacyl)glutathione + H2O = a 2-hydroxy carboxylate + glutathione + H(+). The protein operates within secondary metabolite metabolism; methylglyoxal degradation; (R)-lactate from methylglyoxal: step 2/2. In terms of biological role, thiolesterase that catalyzes the hydrolysis of S-D-lactoyl-glutathione to form glutathione and D-lactic acid. The sequence is that of Hydroxyacylglutathione hydrolase from Xylella fastidiosa (strain M23).